Here is a 347-residue protein sequence, read N- to C-terminus: Phosphoribosylformylglycinamidine cyclo-ligase (347 aa).

Belongs to the AIR synthase family.

It is found in the cytoplasm. It carries out the reaction 2-formamido-N(1)-(5-O-phospho-beta-D-ribosyl)acetamidine + ATP = 5-amino-1-(5-phospho-beta-D-ribosyl)imidazole + ADP + phosphate + H(+). It functions in the pathway purine metabolism; IMP biosynthesis via de novo pathway; 5-amino-1-(5-phospho-D-ribosyl)imidazole from N(2)-formyl-N(1)-(5-phospho-D-ribosyl)glycinamide: step 2/2. This is Phosphoribosylformylglycinamidine cyclo-ligase from Prochlorococcus marinus (strain AS9601).